The sequence spans 136 residues: Large ribosomal subunit protein uL16 (136 aa).

The protein belongs to the universal ribosomal protein uL16 family. Part of the 50S ribosomal subunit.

Functionally, binds 23S rRNA and is also seen to make contacts with the A and possibly P site tRNAs. The protein is Large ribosomal subunit protein uL16 of Aliivibrio salmonicida (strain LFI1238) (Vibrio salmonicida (strain LFI1238)).